Here is a 254-residue protein sequence, read N- to C-terminus: MSNTTMATSTILLFLLAGLAAAHGDGDTTIRLPSDGAKASRPRAAKPWDCCDNIEISRLMIYPPLYRCNDEVKQCAAACKECVEAPGGDFNGGAFVCSDWFSTVDPGPKCTAALDGLSMERPWKCCDNIKRLPTKPDPPQWRCNDELEPSQCTAACKSCREAPGPFPGKLICEDIYWGADPGPFCTPRPWGDCCDKAFCNKMNPPTCRCMDEVKECADACKDCQRVESSEPPRYVCKDRFTGHPGPVCKPRAEN.

The signal sequence occupies residues 1 to 22; it reads MSNTTMATSTILLFLLAGLAAA. The propeptide occupies 23-118; it reads HGDGDTTIRL…KCTAALDGLS (96 aa). 3 consecutive repeats follow at residues 46–120, 121–187, and 188–251; these read KPWD…LSME, RPWK…FCTP, and RPWG…CKPR. Intrachain disulfides connect cysteine 125-cysteine 185, cysteine 126-cysteine 143, cysteine 152-cysteine 159, cysteine 156-cysteine 172, cysteine 193-cysteine 248, cysteine 194-cysteine 209, cysteine 199-cysteine 207, cysteine 216-cysteine 223, and cysteine 220-cysteine 236. The propeptide occupies 252–254; sequence AEN.

Belongs to the Bowman-Birk serine protease inhibitor family.

The chain is Bowman-Birk type bran trypsin inhibitor (RBBI3.3) from Oryza sativa subsp. japonica (Rice).